Here is a 363-residue protein sequence, read N- to C-terminus: G-protein coupled receptor 78 (363 aa).

Over 1-7 (MGPGEAL) the chain is Extracellular. A helical membrane pass occupies residues 8–28 (LAGLLVMVLAVALLSNALVLL). Over 29 to 47 (CCAYSAELRTRASGVLLVN) the chain is Cytoplasmic. A helical membrane pass occupies residues 48-68 (LSLGHLLLAALDMPFTLLGVM). Residues 69-80 (RGRTPSAPGACQ) are Extracellular-facing. An intrachain disulfide couples C79 to C156. The chain crosses the membrane as a helical span at residues 81-101 (VIGFLDTFLASNAALSVAALS). At 102 to 122 (ADQWLAVGFPLRYAGRLRPRY) the chain is on the cytoplasmic side. A helical membrane pass occupies residues 123 to 143 (AGLLLGCAWGQSLAFSGAALG). The Extracellular segment spans residues 144–168 (CSWLGYSSAFASCSLRLPPEPERPR). Residues 169-189 (FAAFTATLHAVGFVLPLAVLC) traverse the membrane as a helical segment. The Cytoplasmic segment spans residues 190–242 (LTSLQVHRVARRHCQRMDTVTMKALALLADLHPSVRQRCLIQQKRRRHRATRK). Residues 243 to 263 (IGIAIATFLICFAPYVMTRLA) traverse the membrane as a helical segment. Residues 264–277 (ELVPFVTVNAQWGI) are Extracellular-facing. A helical transmembrane segment spans residues 278-297 (LSKCLTYSKAVADPFTYSLL). At 298-363 (RRPFRQVLAG…ENDSCLQQTH (66 aa)) the chain is on the cytoplasmic side. Residues 340–363 (TPRPASTHNGSVDTENDSCLQQTH) are disordered. Positions 343 to 363 (PASTHNGSVDTENDSCLQQTH) are enriched in polar residues.

It belongs to the G-protein coupled receptor 1 family. In terms of tissue distribution, high level of expression in placenta. Expressed throughout the brain at low level. No expression detected in skeletal muscle, lung, heart, liver, pancreas, or kidney.

It localises to the cell membrane. Orphan receptor. Displays a significant level of constitutive activity. Its effect is mediated by G(s)-alpha protein that stimulate adenylate cyclase, resulting in an elevation of intracellular cAMP. The sequence is that of G-protein coupled receptor 78 (GPR78) from Homo sapiens (Human).